Consider the following 462-residue polypeptide: tRNA(Ile)-lysidine synthase (462 aa).

31–36 (SGGRDS) lines the ATP pocket.

This sequence belongs to the tRNA(Ile)-lysidine synthase family.

The protein localises to the cytoplasm. It carries out the reaction cytidine(34) in tRNA(Ile2) + L-lysine + ATP = lysidine(34) in tRNA(Ile2) + AMP + diphosphate + H(+). Functionally, ligates lysine onto the cytidine present at position 34 of the AUA codon-specific tRNA(Ile) that contains the anticodon CAU, in an ATP-dependent manner. Cytidine is converted to lysidine, thus changing the amino acid specificity of the tRNA from methionine to isoleucine. This is tRNA(Ile)-lysidine synthase from Ralstonia nicotianae (strain ATCC BAA-1114 / GMI1000) (Ralstonia solanacearum).